The sequence spans 519 residues: 2-isopropylmalate synthase (519 aa).

Positions 5–267 (VIIFDTTLRD…YTNIHHHEIY (263 aa)) constitute a Pyruvate carboxyltransferase domain. Positions 14, 202, 204, and 238 each coordinate Mn(2+). A regulatory domain region spans residues 392–519 (ALESFHIHST…NHKNTQHIKK (128 aa)).

The protein belongs to the alpha-IPM synthase/homocitrate synthase family. LeuA type 1 subfamily. In terms of assembly, homodimer. The cofactor is Mn(2+).

It is found in the cytoplasm. It catalyses the reaction 3-methyl-2-oxobutanoate + acetyl-CoA + H2O = (2S)-2-isopropylmalate + CoA + H(+). It functions in the pathway amino-acid biosynthesis; L-leucine biosynthesis; L-leucine from 3-methyl-2-oxobutanoate: step 1/4. Its function is as follows. Catalyzes the condensation of the acetyl group of acetyl-CoA with 3-methyl-2-oxobutanoate (2-ketoisovalerate) to form 3-carboxy-3-hydroxy-4-methylpentanoate (2-isopropylmalate). The sequence is that of 2-isopropylmalate synthase from Blochmanniella floridana.